A 510-amino-acid chain; its full sequence is MSKRALISVSDKTNIIEFAKGLKESGFEILSTGGTLRSIAEAGIDVTPVDEVTGFPEMLDGRVKTLHPMIHGGLLGKRSNHEHLSQMEEHGIRSIDLVAVNLYPFKETVQKPDVSHQDIIENIDIGGPSMLRSAAKNFEDVLVVTGPTDYNRVLAAITSETDTYEFRQQLAAKVFRHTASYDAMIANYFLSQTEEQYPESYTVTYEKVQDLRYGENPHQQAAFYKEPIQSRPTLATAKQLHGKELSYNNIQDTNAAIEIVKEFAEPAAVAVKHMNPCGIGIGESISTAFERAYQADPTSIFGGIVACNRPVDAATAEQLSQIFLEIVVAPSFESQALEILTQKKNIRLLELDVTSDNKQSNRLTTVDGGALIQAYDAKEVSEADLEVVTNKQPTEQEINDMLFAWKAVKHVKSNAIVLAKDSQTIGVGAGQMNRIGAAEIAIKQAGDKSEGAVLASDAFFPMPDTVEAAAKAGIKAIIQPGGSKRDQDSVDVCNQFGIAMVYTKVRHFKH.

An MGS-like domain is found at Met-1–Thr-145.

This sequence belongs to the PurH family.

It catalyses the reaction (6R)-10-formyltetrahydrofolate + 5-amino-1-(5-phospho-beta-D-ribosyl)imidazole-4-carboxamide = 5-formamido-1-(5-phospho-D-ribosyl)imidazole-4-carboxamide + (6S)-5,6,7,8-tetrahydrofolate. The catalysed reaction is IMP + H2O = 5-formamido-1-(5-phospho-D-ribosyl)imidazole-4-carboxamide. It functions in the pathway purine metabolism; IMP biosynthesis via de novo pathway; 5-formamido-1-(5-phospho-D-ribosyl)imidazole-4-carboxamide from 5-amino-1-(5-phospho-D-ribosyl)imidazole-4-carboxamide (10-formyl THF route): step 1/1. The protein operates within purine metabolism; IMP biosynthesis via de novo pathway; IMP from 5-formamido-1-(5-phospho-D-ribosyl)imidazole-4-carboxamide: step 1/1. This chain is Bifunctional purine biosynthesis protein PurH, found in Oceanobacillus iheyensis (strain DSM 14371 / CIP 107618 / JCM 11309 / KCTC 3954 / HTE831).